Here is a 212-residue protein sequence, read N- to C-terminus: Thiamine-phosphate synthase (212 aa).

38 to 42 (QLREK) contributes to the 4-amino-2-methyl-5-(diphosphooxymethyl)pyrimidine binding site. Mg(2+) is bound by residues Asp-71 and Asp-90. Lys-138 is a 4-amino-2-methyl-5-(diphosphooxymethyl)pyrimidine binding site. A 2-[(2R,5Z)-2-carboxy-4-methylthiazol-5(2H)-ylidene]ethyl phosphate-binding site is contributed by Gly-166.

The protein belongs to the thiamine-phosphate synthase family. It depends on Mg(2+) as a cofactor.

The catalysed reaction is 2-[(2R,5Z)-2-carboxy-4-methylthiazol-5(2H)-ylidene]ethyl phosphate + 4-amino-2-methyl-5-(diphosphooxymethyl)pyrimidine + 2 H(+) = thiamine phosphate + CO2 + diphosphate. It carries out the reaction 2-(2-carboxy-4-methylthiazol-5-yl)ethyl phosphate + 4-amino-2-methyl-5-(diphosphooxymethyl)pyrimidine + 2 H(+) = thiamine phosphate + CO2 + diphosphate. It catalyses the reaction 4-methyl-5-(2-phosphooxyethyl)-thiazole + 4-amino-2-methyl-5-(diphosphooxymethyl)pyrimidine + H(+) = thiamine phosphate + diphosphate. It participates in cofactor biosynthesis; thiamine diphosphate biosynthesis; thiamine phosphate from 4-amino-2-methyl-5-diphosphomethylpyrimidine and 4-methyl-5-(2-phosphoethyl)-thiazole: step 1/1. Condenses 4-methyl-5-(beta-hydroxyethyl)thiazole monophosphate (THZ-P) and 2-methyl-4-amino-5-hydroxymethyl pyrimidine pyrophosphate (HMP-PP) to form thiamine monophosphate (TMP). This is Thiamine-phosphate synthase from Chlamydia caviae (strain ATCC VR-813 / DSM 19441 / 03DC25 / GPIC) (Chlamydophila caviae).